Reading from the N-terminus, the 524-residue chain is MLVKVFSFFILMITMVVIGVSKEYCDDKQSCQNFLLELKAGSSSLSEIRRRDLLIIVLKNSVRRIDMVMIGVMDDTKQHEEMENDLLGVKEDTKLFEEMMESTKDRMIRSVEELLGGEFPNRGSYENVHTWLSSVLTSYITCIDEIGEGAYKRRVEPKLEDLISRARIALALFISISPRDNTELISVIPNSPSWLFHVDKKDLYLNAEALKKIADVVVAKDGTGKYSTVNAAIAAAPQHSQKRFVIYIKTGIYDEIVVIENTKPNLTLIGDGQDLTIITSNLSASNVRRTFNTATVASNGNGFIGVDMCFRNTAGPAKGPAVALRVSGDMSVIYRCRVEGYQDALYPHSDRQFYRECFITGTVDFICGNAVAVFQFCQIVARQPKMGQSNVITAQSRAFKDIYSGFTIQKCNITASSDLDTTTVKTYLGRPWRIFSTVAVMQSFIGDLVDPAGWTPWEGETGLSTLHYREYQNRGPGAVTSRRVKWSGFKVMKDPKQATEFTVAKLLDGETWLKETRIPYESGL.

The N-terminal stretch at 1 to 22 (MLVKVFSFFILMITMVVIGVSK) is a signal peptide. Positions 23–172 (EYCDDKQSCQ…ISRARIALAL (150 aa)) are pectinesterase inhibitor 19. Residues 215–510 (DVVVAKDGTG…FTVAKLLDGE (296 aa)) form a pectinesterase 19 region. N-linked (GlcNAc...) asparagine glycans are attached at residues asparagine 265 and asparagine 281. Substrate is bound at residue threonine 290. Catalysis depends on aspartate 343, which acts as the Proton donor; for pectinesterase activity. A disulfide bridge links cysteine 357 with cysteine 377. The active-site Nucleophile; for pectinesterase activity is the aspartate 364. The N-linked (GlcNAc...) asparagine glycan is linked to asparagine 412. The substrate site is built by arginine 430 and tryptophan 432.

This sequence in the N-terminal section; belongs to the PMEI family. It in the C-terminal section; belongs to the pectinesterase family. In terms of tissue distribution, expressed in siliques, but not in flower buds.

The protein resides in the secreted. Its subcellular location is the cell wall. The catalysed reaction is [(1-&gt;4)-alpha-D-galacturonosyl methyl ester](n) + n H2O = [(1-&gt;4)-alpha-D-galacturonosyl](n) + n methanol + n H(+). The protein operates within glycan metabolism; pectin degradation; 2-dehydro-3-deoxy-D-gluconate from pectin: step 1/5. Functionally, acts in the modification of cell walls via demethylesterification of cell wall pectin. This is Probable pectinesterase/pectinesterase inhibitor 19 (PME19) from Arabidopsis thaliana (Mouse-ear cress).